Here is a 283-residue protein sequence, read N- to C-terminus: Acetyl-coenzyme A carboxylase carboxyl transferase subunit beta (283 aa).

Residues 29-283 form the CoA carboxyltransferase N-terminal domain; it reads LWVACPKCQQ…LKLHERGAHY (255 aa). 4 residues coordinate Zn(2+): Cys-33, Cys-36, Cys-51, and Cys-54. The C4-type zinc-finger motif lies at 33–54; sequence CPKCQQSIYHKDLGYYRTCPVC.

It belongs to the AccD/PCCB family. In terms of assembly, acetyl-CoA carboxylase is a heterohexamer composed of biotin carboxyl carrier protein (AccB), biotin carboxylase (AccC) and two subunits each of ACCase subunit alpha (AccA) and ACCase subunit beta (AccD). The cofactor is Zn(2+).

The protein localises to the cytoplasm. It catalyses the reaction N(6)-carboxybiotinyl-L-lysyl-[protein] + acetyl-CoA = N(6)-biotinyl-L-lysyl-[protein] + malonyl-CoA. It functions in the pathway lipid metabolism; malonyl-CoA biosynthesis; malonyl-CoA from acetyl-CoA: step 1/1. Its function is as follows. Component of the acetyl coenzyme A carboxylase (ACC) complex. Biotin carboxylase (BC) catalyzes the carboxylation of biotin on its carrier protein (BCCP) and then the CO(2) group is transferred by the transcarboxylase to acetyl-CoA to form malonyl-CoA. This Latilactobacillus sakei subsp. sakei (strain 23K) (Lactobacillus sakei subsp. sakei) protein is Acetyl-coenzyme A carboxylase carboxyl transferase subunit beta.